A 156-amino-acid chain; its full sequence is Gene 55 protein (156 aa).

A disordered region spans residues 132-156 (KRRWSGGNASSHEERMRGPFTEVAE).

The protein is Gene 55 protein (55) of Mycobacterium phage L5 (Mycobacteriophage L5).